The following is a 392-amino-acid chain: Chorismate synthase (392 aa).

2 residues coordinate NADP(+): Arg-40 and Arg-46. FMN is bound by residues 135–137 (RAS), 256–257 (QA), Gly-300, 315–319 (KPISS), and Arg-341.

The protein belongs to the chorismate synthase family. Homotetramer. Requires FMNH2 as cofactor.

It catalyses the reaction 5-O-(1-carboxyvinyl)-3-phosphoshikimate = chorismate + phosphate. It participates in metabolic intermediate biosynthesis; chorismate biosynthesis; chorismate from D-erythrose 4-phosphate and phosphoenolpyruvate: step 7/7. In terms of biological role, catalyzes the anti-1,4-elimination of the C-3 phosphate and the C-6 proR hydrogen from 5-enolpyruvylshikimate-3-phosphate (EPSP) to yield chorismate, which is the branch point compound that serves as the starting substrate for the three terminal pathways of aromatic amino acid biosynthesis. This reaction introduces a second double bond into the aromatic ring system. The protein is Chorismate synthase of Salinispora tropica (strain ATCC BAA-916 / DSM 44818 / JCM 13857 / NBRC 105044 / CNB-440).